The sequence spans 660 residues: Methionine--tRNA ligase (660 aa).

The short motif at 11 to 21 (PYANGPCHLGH) is the 'HIGH' region element. Residues Cys143, Cys146, Cys155, and Cys158 each coordinate Zn(2+). Positions 325-329 (KMSTS) match the 'KMSKS' region motif. Residue Thr328 coordinates ATP. One can recognise a tRNA-binding domain in the interval 563–660 (DFDKVVIKIG…DECEVGERIQ (98 aa)).

This sequence belongs to the class-I aminoacyl-tRNA synthetase family. MetG type 1 subfamily. In terms of assembly, homodimer. Zn(2+) serves as cofactor.

Its subcellular location is the cytoplasm. It carries out the reaction tRNA(Met) + L-methionine + ATP = L-methionyl-tRNA(Met) + AMP + diphosphate. Functionally, is required not only for elongation of protein synthesis but also for the initiation of all mRNA translation through initiator tRNA(fMet) aminoacylation. The protein is Methionine--tRNA ligase of Methanobrevibacter smithii (strain ATCC 35061 / DSM 861 / OCM 144 / PS).